We begin with the raw amino-acid sequence, 357 residues long: Protein-L-isoaspartate O-methyltransferase domain-containing protein 1 (357 aa).

The N-myristoyl glycine moiety is linked to residue glycine 2. The active site involves serine 64. 3 adoMet binding motif regions span residues 85–94 (LNLGSGTGYL), 160–164 (YDRIY), and 181–191 (LKVGGILVMPI). The tract at residues 240 to 250 (VRNLQDLARIY) is BC-box. The tract at residues 299 to 333 (PLDSEEDEKMEEDNKEEEEKDHNEAMKPEEPPQNL) is disordered. A compositionally biased stretch (acidic residues) spans 301–317 (DSEEDEKMEEDNKEEEE). Basic and acidic residues predominate over residues 318 to 333 (KDHNEAMKPEEPPQNL). Positions 341 to 344 (LPLP) are CUL-box.

It belongs to the methyltransferase superfamily. L-isoaspartyl/D-aspartyl protein methyltransferase family. In terms of assembly, component of the probable ECS(PCMTD1) E3 ubiquitin-protein ligase complex, at least composed of CUL5, ELOB, ELOC, RBX2 and PCMTD1. Interacts (via the BC-box) with ELOB and ELOC; the interaction is direct and stabilizes PCMTD1.

Its subcellular location is the cytoplasm. The protein localises to the membrane. Functionally, substrate recognition component of an ECS (Elongin BC-CUL5-SOCS-box protein) E3 ubiquitin ligase complex which mediates the ubiquitination and subsequent proteasomal degradation of target proteins. Specifically binds to the methyltransferase cofactor S-adenosylmethionine (AdoMet) via the N-terminal AdoMet binding motif, but does not display methyltransferase activity. May provide an alternate maintenance pathway for modified proteins by acting as a damage-specific E3 ubiquitin ligase adaptor protein. The chain is Protein-L-isoaspartate O-methyltransferase domain-containing protein 1 from Homo sapiens (Human).